A 142-amino-acid chain; its full sequence is Galactose-6-phosphate isomerase subunit LacA (142 aa).

This sequence belongs to the LacAB/RpiB family. As to quaternary structure, heteromultimeric protein consisting of LacA and LacB.

It catalyses the reaction aldehydo-D-galactose 6-phosphate = keto-D-tagatose 6-phosphate. Its pathway is carbohydrate metabolism; D-galactose 6-phosphate degradation; D-tagatose 6-phosphate from D-galactose 6-phosphate: step 1/1. This Staphylococcus aureus protein is Galactose-6-phosphate isomerase subunit LacA.